Reading from the N-terminus, the 478-residue chain is Transposon Ty1-H Gag polyprotein (478 aa).

Composition is skewed to polar residues over residues 1-10 (MESQQLSNYP), 48-60 (TKAN…TPAS), and 127-152 (QSQF…GNTF). Disordered regions lie at residues 1–84 (MESQ…QNGP), 126–174 (PQSQ…PPPM), and 390–478 (GSRN…PETY). Residues 153-165 (TDSSSADSDMTST) are compositionally biased toward low complexity. Residues 337–439 (NNGIHINNKV…NSKSKTARAH (103 aa)) form an RNA-binding region. The segment covering 440 to 456 (NVSTSNNSPSTDNDSIS) has biased composition (low complexity). Positions 457-466 (KSTTEPIQLN) are enriched in polar residues. The segment covering 467 to 478 (NKHDLHLRPETY) has biased composition (basic and acidic residues).

In terms of assembly, homotrimer.

The protein localises to the cytoplasm. Functionally, capsid protein (CA) is the structural component of the virus-like particle (VLP), forming the shell that encapsulates the retrotransposons dimeric RNA genome. The particles are assembled from trimer-clustered units and there are holes in the capsid shells that allow for the diffusion of macromolecules. CA also has nucleocapsid-like chaperone activity, promoting primer tRNA(i)-Met annealing to the multipartite primer-binding site (PBS), dimerization of Ty1 RNA and initiation of reverse transcription. This Saccharomyces cerevisiae (strain ATCC 204508 / S288c) (Baker's yeast) protein is Transposon Ty1-H Gag polyprotein (TY1A-H).